A 460-amino-acid chain; its full sequence is Serine--tRNA ligase (460 aa).

255–257 provides a ligand contact to L-serine; it reads TAE. ATP is bound by residues 286–288 and Val302; that span reads RKE. Residue Glu309 coordinates L-serine. 373 to 376 contributes to the ATP binding site; that stretch reads EMVS. Thr409 contributes to the L-serine binding site.

It belongs to the class-II aminoacyl-tRNA synthetase family. Type-1 seryl-tRNA synthetase subfamily. In terms of assembly, homodimer. The tRNA molecule binds across the dimer.

Its subcellular location is the cytoplasm. It carries out the reaction tRNA(Ser) + L-serine + ATP = L-seryl-tRNA(Ser) + AMP + diphosphate + H(+). It catalyses the reaction tRNA(Sec) + L-serine + ATP = L-seryl-tRNA(Sec) + AMP + diphosphate + H(+). Its pathway is aminoacyl-tRNA biosynthesis; selenocysteinyl-tRNA(Sec) biosynthesis; L-seryl-tRNA(Sec) from L-serine and tRNA(Sec): step 1/1. In terms of biological role, catalyzes the attachment of serine to tRNA(Ser). Is also able to aminoacylate tRNA(Sec) with serine, to form the misacylated tRNA L-seryl-tRNA(Sec), which will be further converted into selenocysteinyl-tRNA(Sec). This Hyperthermus butylicus (strain DSM 5456 / JCM 9403 / PLM1-5) protein is Serine--tRNA ligase.